The following is a 278-amino-acid chain: Phosphatidylglycerol--prolipoprotein diacylglyceryl transferase (278 aa).

4 helical membrane-spanning segments follow: residues I18–A38, L55–E75, W90–F110, and W115–I135. R137 is a binding site for a 1,2-diacyl-sn-glycero-3-phospho-(1'-sn-glycerol). Helical transmembrane passes span Q177–L197, G207–M227, and I237–F257.

It belongs to the Lgt family.

The protein localises to the cell membrane. It carries out the reaction L-cysteinyl-[prolipoprotein] + a 1,2-diacyl-sn-glycero-3-phospho-(1'-sn-glycerol) = an S-1,2-diacyl-sn-glyceryl-L-cysteinyl-[prolipoprotein] + sn-glycerol 1-phosphate + H(+). The protein operates within protein modification; lipoprotein biosynthesis (diacylglyceryl transfer). Its function is as follows. Catalyzes the transfer of the diacylglyceryl group from phosphatidylglycerol to the sulfhydryl group of the N-terminal cysteine of a prolipoprotein, the first step in the formation of mature lipoproteins. This chain is Phosphatidylglycerol--prolipoprotein diacylglyceryl transferase, found in Pediococcus pentosaceus (strain ATCC 25745 / CCUG 21536 / LMG 10740 / 183-1w).